We begin with the raw amino-acid sequence, 458 residues long: Argininosuccinate lyase (458 aa).

It belongs to the lyase 1 family. Argininosuccinate lyase subfamily.

It localises to the cytoplasm. It carries out the reaction 2-(N(omega)-L-arginino)succinate = fumarate + L-arginine. It participates in amino-acid biosynthesis; L-arginine biosynthesis; L-arginine from L-ornithine and carbamoyl phosphate: step 3/3. The polypeptide is Argininosuccinate lyase (Neisseria gonorrhoeae (strain ATCC 700825 / FA 1090)).